A 413-amino-acid polypeptide reads, in one-letter code: CinA-like protein (413 aa).

This sequence belongs to the CinA family.

The polypeptide is CinA-like protein (Crocosphaera subtropica (strain ATCC 51142 / BH68) (Cyanothece sp. (strain ATCC 51142))).